Reading from the N-terminus, the 339-residue chain is DNA-directed RNA polymerase subunit alpha (339 aa).

The alpha N-terminal domain (alpha-NTD) stretch occupies residues 1-235; that stretch reads MTIQKNWQEL…DQLNVFVNFE (235 aa). Residues 251–339 are alpha C-terminal domain (alpha-CTD); sequence FNPAFLKKVD…ELAKRFEDHY (89 aa).

Belongs to the RNA polymerase alpha chain family. In terms of assembly, homodimer. The RNAP catalytic core consists of 2 alpha, 1 beta, 1 beta' and 1 omega subunit. When a sigma factor is associated with the core the holoenzyme is formed, which can initiate transcription.

It catalyses the reaction RNA(n) + a ribonucleoside 5'-triphosphate = RNA(n+1) + diphosphate. Functionally, DNA-dependent RNA polymerase catalyzes the transcription of DNA into RNA using the four ribonucleoside triphosphates as substrates. The protein is DNA-directed RNA polymerase subunit alpha of Afipia carboxidovorans (strain ATCC 49405 / DSM 1227 / KCTC 32145 / OM5) (Oligotropha carboxidovorans).